The sequence spans 218 residues: Protein-L-isoaspartate O-methyltransferase (218 aa).

Residue Ser60 is part of the active site.

This sequence belongs to the methyltransferase superfamily. L-isoaspartyl/D-aspartyl protein methyltransferase family.

The protein resides in the cytoplasm. It carries out the reaction [protein]-L-isoaspartate + S-adenosyl-L-methionine = [protein]-L-isoaspartate alpha-methyl ester + S-adenosyl-L-homocysteine. Functionally, catalyzes the methyl esterification of L-isoaspartyl residues in peptides and proteins that result from spontaneous decomposition of normal L-aspartyl and L-asparaginyl residues. It plays a role in the repair and/or degradation of damaged proteins. This is Protein-L-isoaspartate O-methyltransferase from Roseiflexus castenholzii (strain DSM 13941 / HLO8).